We begin with the raw amino-acid sequence, 569 residues long: Glucose-6-phosphate isomerase, cytosolic 2 (569 aa).

Glutamate 360 serves as the catalytic Proton donor. Residues histidine 391 and lysine 516 contribute to the active site.

The protein belongs to the GPI family. Homodimer.

It localises to the cytoplasm. It carries out the reaction alpha-D-glucose 6-phosphate = beta-D-fructose 6-phosphate. It functions in the pathway carbohydrate degradation; glycolysis; D-glyceraldehyde 3-phosphate and glycerone phosphate from D-glucose: step 2/4. This is Glucose-6-phosphate isomerase, cytosolic 2 (PGIC2) from Clarkia concinna (Red ribbons).